A 90-amino-acid chain; its full sequence is Small ribosomal subunit protein uS15 (90 aa).

Belongs to the universal ribosomal protein uS15 family. In terms of assembly, part of the 30S ribosomal subunit. Forms a bridge to the 50S subunit in the 70S ribosome, contacting the 23S rRNA.

Functionally, one of the primary rRNA binding proteins, it binds directly to 16S rRNA where it helps nucleate assembly of the platform of the 30S subunit by binding and bridging several RNA helices of the 16S rRNA. Its function is as follows. Forms an intersubunit bridge (bridge B4) with the 23S rRNA of the 50S subunit in the ribosome. This is Small ribosomal subunit protein uS15 from Wolbachia pipientis wMel.